The following is a 475-amino-acid chain: Aspartyl/glutamyl-tRNA(Asn/Gln) amidotransferase subunit B (475 aa).

The protein belongs to the GatB/GatE family. GatB subfamily. Heterotrimer of A, B and C subunits.

The catalysed reaction is L-glutamyl-tRNA(Gln) + L-glutamine + ATP + H2O = L-glutaminyl-tRNA(Gln) + L-glutamate + ADP + phosphate + H(+). It catalyses the reaction L-aspartyl-tRNA(Asn) + L-glutamine + ATP + H2O = L-asparaginyl-tRNA(Asn) + L-glutamate + ADP + phosphate + 2 H(+). Allows the formation of correctly charged Asn-tRNA(Asn) or Gln-tRNA(Gln) through the transamidation of misacylated Asp-tRNA(Asn) or Glu-tRNA(Gln) in organisms which lack either or both of asparaginyl-tRNA or glutaminyl-tRNA synthetases. The reaction takes place in the presence of glutamine and ATP through an activated phospho-Asp-tRNA(Asn) or phospho-Glu-tRNA(Gln). The sequence is that of Aspartyl/glutamyl-tRNA(Asn/Gln) amidotransferase subunit B from Staphylococcus aureus (strain bovine RF122 / ET3-1).